Here is a 95-residue protein sequence, read N- to C-terminus: Small ribosomal subunit protein bS20c (95 aa).

The interval N76–L95 is disordered. Positions K80–L95 are enriched in basic residues.

This sequence belongs to the bacterial ribosomal protein bS20 family.

It is found in the plastid. The protein localises to the chloroplast. Its function is as follows. Binds directly to 16S ribosomal RNA. The chain is Small ribosomal subunit protein bS20c from Guillardia theta (Cryptophyte).